The sequence spans 120 residues: Chaperonin GroEL (120 aa).

23–27 (DGTTT) contributes to the ATP binding site.

Belongs to the chaperonin (HSP60) family. Forms a cylinder of 14 subunits composed of two heptameric rings stacked back-to-back. Interacts with the co-chaperonin GroES.

The protein resides in the cytoplasm. The enzyme catalyses ATP + H2O + a folded polypeptide = ADP + phosphate + an unfolded polypeptide.. Its function is as follows. Together with its co-chaperonin GroES, plays an essential role in assisting protein folding. The GroEL-GroES system forms a nano-cage that allows encapsulation of the non-native substrate proteins and provides a physical environment optimized to promote and accelerate protein folding. The protein is Chaperonin GroEL of Mycolicibacter nonchromogenicus (Mycobacterium nonchromogenicum).